A 296-amino-acid chain; its full sequence is uncharacterized protein (296 aa).

One can recognise an HTH lysR-type domain in the interval 1–60 (MDPKISYFQTFIVASKTKSFSKAAKRLGITQGTVSNHISALEKYFDAQLFLRTPEGVDLT). The segment at residues 20-39 (FSKAAKRLGITQGTVSNHIS) is a DNA-binding region (H-T-H motif).

The protein belongs to the LysR transcriptional regulatory family.

This is an uncharacterized protein from Methanocaldococcus jannaschii (strain ATCC 43067 / DSM 2661 / JAL-1 / JCM 10045 / NBRC 100440) (Methanococcus jannaschii).